The sequence spans 241 residues: Eukaryotic translation initiation factor 3 subunit J (241 aa).

Residues Met1 to Lys97 are disordered. Acidic residues predominate over residues Gly28–Leu45. Positions Glu31–Thr119 form a coiled coil. 2 stretches are compositionally biased toward basic and acidic residues: residues Glu46–Lys58 and Ile69–Lys87.

The protein belongs to the eIF-3 subunit J family. As to quaternary structure, component of the eukaryotic translation initiation factor 3 (eIF-3) complex.

It localises to the cytoplasm. Functionally, component of the eukaryotic translation initiation factor 3 (eIF-3) complex, which is involved in protein synthesis of a specialized repertoire of mRNAs and, together with other initiation factors, stimulates binding of mRNA and methionyl-tRNAi to the 40S ribosome. The eIF-3 complex specifically targets and initiates translation of a subset of mRNAs involved in cell proliferation. In Aedes aegypti (Yellowfever mosquito), this protein is Eukaryotic translation initiation factor 3 subunit J.